The chain runs to 672 residues: Acetoacetyl-CoA synthetase (672 aa).

The protein belongs to the ATP-dependent AMP-binding enzyme family. In terms of tissue distribution, abundant in male subcutaneous white adipose tissue after weaning. In white adipose tissue, it is preferentially detected in mature adipocytes but not in preadipocytes. The expression in primary preadipocytes increases during the adipocyte differentiation. In brain, it is expressed in the midbrain, pons/medulla, cerebral cortex, hippocampus and cerebellum. The expression in the cerebellum is restricted primarily to glial cells, while in the cerebral cortex, it is restricted to neuronal cells.

The protein localises to the cytoplasm. Its subcellular location is the cytosol. The enzyme catalyses acetoacetate + ATP + CoA = acetoacetyl-CoA + AMP + diphosphate. Functionally, converts acetoacetate to acetoacetyl-CoA in the cytosol. Ketone body-utilizing enzyme, responsible for the synthesis of cholesterol and fatty acids. The chain is Acetoacetyl-CoA synthetase (Aacs) from Rattus norvegicus (Rat).